Reading from the N-terminus, the 392-residue chain is Probable nucleoredoxin 3 (392 aa).

2 consecutive Thioredoxin domains span residues 17-171 (LYSI…DSKR) and 177-326 (EKLL…ELKA).

Belongs to the nucleoredoxin family.

It catalyses the reaction [protein]-dithiol + NAD(+) = [protein]-disulfide + NADH + H(+). The enzyme catalyses [protein]-dithiol + NADP(+) = [protein]-disulfide + NADPH + H(+). Probable thiol-disulfide oxidoreductase that may participate in various redox reactions. In Arabidopsis thaliana (Mouse-ear cress), this protein is Probable nucleoredoxin 3.